The following is a 195-amino-acid chain: Putative 3-methyladenine DNA glycosylase (195 aa).

The protein belongs to the DNA glycosylase MPG family.

The polypeptide is Putative 3-methyladenine DNA glycosylase (Synechococcus sp. (strain JA-3-3Ab) (Cyanobacteria bacterium Yellowstone A-Prime)).